Reading from the N-terminus, the 347-residue chain is N-acetyl-gamma-glutamyl-phosphate reductase (347 aa).

Residue C153 is part of the active site.

The protein belongs to the NAGSA dehydrogenase family. Type 1 subfamily.

Its subcellular location is the cytoplasm. The enzyme catalyses N-acetyl-L-glutamate 5-semialdehyde + phosphate + NADP(+) = N-acetyl-L-glutamyl 5-phosphate + NADPH + H(+). The protein operates within amino-acid biosynthesis; L-arginine biosynthesis; N(2)-acetyl-L-ornithine from L-glutamate: step 3/4. Catalyzes the NADPH-dependent reduction of N-acetyl-5-glutamyl phosphate to yield N-acetyl-L-glutamate 5-semialdehyde. The sequence is that of N-acetyl-gamma-glutamyl-phosphate reductase from Mycobacterium avium (strain 104).